Consider the following 983-residue polypeptide: Type IV secretion system protein CagE (983 aa).

Residue 597 to 604 coordinates ATP; that stretch reads GSTGSGKT.

The protein belongs to the TrbE/VirB4 family. As to quaternary structure, component of the Cag type IV secretion system, which is composed of a wheel-shaped outer membrane complex (OMC) and an inner membrane complex (IMC). Interacts with CagV and CagBeta.

It is found in the cell inner membrane. The catalysed reaction is ATP + H2O + cellular proteinSide 1 = ADP + phosphate + cellular proteinSide 2.. In terms of biological role, ATPase component of the type IV secretion system Cag (Cag-T4SS). Acts as a molecular motor to provide the energy that is required for the export of proteins. Required for CagA translocation and induction of IL-8 in host gastric epithelial cells. Plays a key role in Cag-T4SS pilus biogenesis, especially in the localization and stabilization of the pilus-associated components CagI, CagL and the surface protein CagH. Is also critical for assembly of the entire cytoplasmic portion of the Cag inner membrane complex (IMC). In Helicobacter pylori (strain ATCC 700392 / 26695) (Campylobacter pylori), this protein is Type IV secretion system protein CagE.